A 711-amino-acid polypeptide reads, in one-letter code: K(+)-insensitive pyrophosphate-energized proton pump (711 aa).

The next 5 membrane-spanning stretches (helical) occupy residues 7–27, 58–78, 85–105, 145–165, and 179–199; these read LIYG…KFIF, IASL…YGHL, ALSF…CSAL, LAVT…YGGL, and IVGF…GGGI. Lys-202 lines the substrate pocket. Mg(2+)-binding residues include Asp-205, Asp-209, and Asp-235. 6 consecutive transmembrane segments (helical) span residues 251-271, 274-294, 311-331, 343-363, 403-423, and 431-451; these read TAAE…IFGW, ILFP…GIFF, GYFV…KVML, YLLL…FVFL, LPVI…EMAI, and LYGT…ILAM. Asp-459 contributes to the Mg(2+) binding site. Transmembrane regions (helical) follow at residues 495 to 515, 535 to 555, 602 to 622, and 624 to 644; these read YAIG…LDEV, EVFI…STAI, EMVI…VILG, and EAAA…ALYL. Ca(2+) contacts are provided by Asp-652, Asp-678, and Asp-682. Lys-685 serves as a coordination point for substrate. A helical transmembrane segment spans residues 690–710; that stretch reads PSLHVLIKLISTITLVFVALF.

Belongs to the H(+)-translocating pyrophosphatase (TC 3.A.10) family. K(+)-insensitive subfamily. In terms of assembly, homodimer. The cofactor is Mg(2+).

It is found in the cell membrane. It catalyses the reaction diphosphate + H2O + H(+)(in) = 2 phosphate + 2 H(+)(out). Functionally, proton pump that utilizes the energy of pyrophosphate hydrolysis as the driving force for proton movement across the membrane. Generates a proton motive force. This chain is K(+)-insensitive pyrophosphate-energized proton pump, found in Caldanaerobacter subterraneus subsp. tengcongensis (strain DSM 15242 / JCM 11007 / NBRC 100824 / MB4) (Thermoanaerobacter tengcongensis).